Reading from the N-terminus, the 370-residue chain is Phospho-N-acetylmuramoyl-pentapeptide-transferase (370 aa).

The next 10 membrane-spanning stretches (helical) occupy residues 24–44, 78–98, 103–123, 138–158, 177–197, 209–229, 245–265, 273–293, 298–318, and 347–367; these read YLTF…VAMG, TMGG…WADL, VWVV…DDYA, KLVA…LFAP, ALVI…IAGF, GLAI…AYLV, GVGE…GFLW, IFMG…IAVC, LVLG…MIQV, and TVVI…LATL.

This sequence belongs to the glycosyltransferase 4 family. MraY subfamily. The cofactor is Mg(2+).

The protein resides in the cell inner membrane. The enzyme catalyses UDP-N-acetyl-alpha-D-muramoyl-L-alanyl-gamma-D-glutamyl-meso-2,6-diaminopimeloyl-D-alanyl-D-alanine + di-trans,octa-cis-undecaprenyl phosphate = di-trans,octa-cis-undecaprenyl diphospho-N-acetyl-alpha-D-muramoyl-L-alanyl-D-glutamyl-meso-2,6-diaminopimeloyl-D-alanyl-D-alanine + UMP. It participates in cell wall biogenesis; peptidoglycan biosynthesis. Its function is as follows. Catalyzes the initial step of the lipid cycle reactions in the biosynthesis of the cell wall peptidoglycan: transfers peptidoglycan precursor phospho-MurNAc-pentapeptide from UDP-MurNAc-pentapeptide onto the lipid carrier undecaprenyl phosphate, yielding undecaprenyl-pyrophosphoryl-MurNAc-pentapeptide, known as lipid I. This chain is Phospho-N-acetylmuramoyl-pentapeptide-transferase, found in Caulobacter vibrioides (strain NA1000 / CB15N) (Caulobacter crescentus).